The primary structure comprises 219 residues: Ras-related protein Rab-3D (219 aa).

A2 is subject to N-acetylalanine. Residue 29 to 37 (GNSSVGKTS) participates in GDP binding. GTP-binding residues include S31, S32, V33, G34, K35, T36, S37, P49, and S53. Position 36 (T36) interacts with Mg(2+). Positions 49–58 (PAFVSTVGID) match the Switch 1 motif. T54 and D77 together coordinate Mg(2+). Residue G80 participates in GTP binding. The Switch 2 motif lies at 80 to 96 (GQERYRTITTAYYRGAM). T86 carries the post-translational modification Phosphothreonine; by LRRK2. GTP-binding residues include N135, K136, D138, A166, and K167. GDP-binding positions include 135–138 (NKCD) and 165–167 (SAK). The residue at position 190 (S190) is a Phosphoserine. A disordered region spans residues 190–219 (SLEPSSSPGSNGKGPALGDTPPPQPSSCSC). Low complexity predominate over residues 193–203 (PSSSPGSNGKG). Pro residues predominate over residues 209–219 (TPPPQPSSCSC). S-geranylgeranyl cysteine attachment occurs at residues C217 and C219. Cysteine methyl ester is present on C219.

The protein belongs to the small GTPase superfamily. Rab family. In terms of assembly, interacts with RIMS1, RIMS2, RPH3A, RPH3AL and RAB3IP. The GTP-bound form interacts with REP15. Interacts with CHM and CHML; phosphorylation at Thr-86 disrupts these interactions. Interacts with MADD (via uDENN domain); the GTP-bound form is preferred for interaction. Requires Mg(2+) as cofactor. In terms of processing, phosphorylation of Thr-86 in the switch II region by LRRK2 prevents the association of RAB regulatory proteins, including CHM and CHML. Predominantly expressed in the adipocyte tissue, but is also expressed in several other organs including skin, spleen, heart and lung.

The protein resides in the cell membrane. The catalysed reaction is GTP + H2O = GDP + phosphate + H(+). Regulated by guanine nucleotide exchange factors (GEFs) which promote the exchange of bound GDP for free GTP. Regulated by GTPase activating proteins (GAPs) which increase the GTP hydrolysis activity. Inhibited by GDP dissociation inhibitors (GDIs) which prevent Rab-GDP dissociation. In terms of biological role, the small GTPases Rab are key regulators of intracellular membrane trafficking, from the formation of transport vesicles to their fusion with membranes. Rabs cycle between an inactive GDP-bound form and an active GTP-bound form that is able to recruit to membranes different sets of downstream effectors directly responsible for vesicle formation, movement, tethering and fusion. RAB3D may be involved in the insulin-induced exocytosis of GLUT4-containing vesicles in adipocytes. The sequence is that of Ras-related protein Rab-3D from Mus musculus (Mouse).